A 496-amino-acid polypeptide reads, in one-letter code: Glutamate--tRNA ligase (496 aa).

The short motif at 11–21 is the 'HIGH' region element; that stretch reads PSPTGLLHIGN. The 'KMSKS' region signature appears at 255-259; sequence KLSKR. An ATP-binding site is contributed by K258.

The protein belongs to the class-I aminoacyl-tRNA synthetase family. Glutamate--tRNA ligase type 1 subfamily. Monomer.

The protein resides in the cytoplasm. It catalyses the reaction tRNA(Glu) + L-glutamate + ATP = L-glutamyl-tRNA(Glu) + AMP + diphosphate. Catalyzes the attachment of glutamate to tRNA(Glu) in a two-step reaction: glutamate is first activated by ATP to form Glu-AMP and then transferred to the acceptor end of tRNA(Glu). The polypeptide is Glutamate--tRNA ligase (Streptococcus pyogenes serotype M49 (strain NZ131)).